A 677-amino-acid chain; its full sequence is Galactocerebrosidase (677 aa).

The N-terminal stretch at Met1–Ala33 is a signal peptide. Substrate contacts are provided by Thr101, Trp143, and Asn189. Glu190 functions as the Proton donor/acceptor in the catalytic mechanism. The active-site Nucleophile is the Glu265. Cys278 and Cys385 are joined by a disulfide. N-linked (GlcNAc...) asparagine glycans are attached at residues Asn291, Asn370, and Asn381. Arg387 provides a ligand contact to substrate. Asn394, Asn399, Asn424, Asn441, Asn509, Asn549, and Asn630 each carry an N-linked (GlcNAc...) asparagine glycan.

It belongs to the glycosyl hydrolase 59 family.

The protein localises to the lysosome. It catalyses the reaction a beta-D-galactosyl-(1&lt;-&gt;1')-N-acylsphing-4-enine + H2O = an N-acylsphing-4-enine + D-galactose. The catalysed reaction is beta-D-galactosyl-(1&lt;-&gt;1)-sphing-4-enine + H2O = sphing-4-enine + D-galactose. The enzyme catalyses a D-galactosylceramide + H2O = an N-acyl-sphingoid base + D-galactose. In terms of biological role, hydrolyzes the galactose ester bonds of glycolipids such as galactosylceramide and galactosylsphingosine. The polypeptide is Galactocerebrosidase (Xenopus laevis (African clawed frog)).